Here is a 253-residue protein sequence, read N- to C-terminus: 5'-nucleotidase SurE (253 aa).

The a divalent metal cation site is built by Asp-8, Asp-9, Ser-40, and Asn-93.

It belongs to the SurE nucleotidase family. It depends on a divalent metal cation as a cofactor.

It localises to the cytoplasm. The catalysed reaction is a ribonucleoside 5'-phosphate + H2O = a ribonucleoside + phosphate. Its function is as follows. Nucleotidase that shows phosphatase activity on nucleoside 5'-monophosphates. This is 5'-nucleotidase SurE from Haemophilus ducreyi (strain 35000HP / ATCC 700724).